The sequence spans 1082 residues: Error-prone DNA polymerase (1082 aa).

It belongs to the DNA polymerase type-C family. DnaE2 subfamily.

It localises to the cytoplasm. It catalyses the reaction DNA(n) + a 2'-deoxyribonucleoside 5'-triphosphate = DNA(n+1) + diphosphate. Its function is as follows. DNA polymerase involved in damage-induced mutagenesis and translesion synthesis (TLS). It is not the major replicative DNA polymerase. The sequence is that of Error-prone DNA polymerase from Xanthomonas campestris pv. campestris (strain B100).